Consider the following 367-residue polypeptide: Probable trehalose-phosphate phosphatase 4 (367 aa).

Belongs to the trehalose phosphatase family. A divalent metal cation serves as cofactor.

It catalyses the reaction alpha,alpha-trehalose 6-phosphate + H2O = alpha,alpha-trehalose + phosphate. The protein operates within glycan biosynthesis; trehalose biosynthesis. Its function is as follows. Removes the phosphate from trehalose 6-phosphate to produce free trehalose. Trehalose accumulation in plant may improve abiotic stress tolerance. The polypeptide is Probable trehalose-phosphate phosphatase 4 (TPP4) (Oryza sativa subsp. japonica (Rice)).